Reading from the N-terminus, the 378-residue chain is GDP-mannose 3,5-epimerase 1 (378 aa).

NAD(+)-binding positions include 36–62 (GAGG…SDWK), D60, and D80. Substrate contacts are provided by residues G105 and 145-147 (SAC). Y175 and K179 together coordinate NAD(+). Y175 acts as the Proton acceptor in catalysis. Substrate-binding positions include N204, 217–219 (EKA), K226, 242–244 (QTR), R307, and S357.

It belongs to the NAD(P)-dependent epimerase/dehydratase family. In terms of assembly, homodimer. It depends on NAD(+) as a cofactor.

The enzyme catalyses GDP-alpha-D-mannose = GDP-beta-L-gulose. The catalysed reaction is GDP-beta-L-gulose = GDP-beta-L-galactose. It functions in the pathway cofactor biosynthesis; L-ascorbate biosynthesis via GDP-alpha-D-mannose pathway; L-ascorbate from GDP-alpha-D-mannose: step 1/5. With respect to regulation, strongly activated by NAD. Activated by NADP. Slightly activated by NADH and NADPH. Inhibited by GDP. In terms of biological role, catalyzes a reversible epimerization of GDP-D-mannose that precedes the committed step in the biosynthesis of vitamin C (L-ascorbate), resulting in the hydrolysis of the highly energetic glycosyl-pyrophosphoryl linkage. Able to catalyze 2 distinct epimerization reactions and can release both GDP-L-galactose and GDP-L-gulose from GDP-mannose. This chain is GDP-mannose 3,5-epimerase 1 (GME-1), found in Oryza sativa subsp. japonica (Rice).